Consider the following 447-residue polypeptide: Tubulin beta-1 chain (447 aa).

Residues Gln-11, Glu-69, Ser-138, Gly-142, Thr-143, Gly-144, Asn-204, and Asn-226 each coordinate GTP. Residue Glu-69 coordinates Mg(2+). The disordered stretch occupies residues 424–447 (QYQDATAEEEGEGDEEEAEGEAAA). Over residues 429–447 (TAEEEGEGDEEEAEGEAAA) the composition is skewed to acidic residues.

Belongs to the tubulin family. In terms of assembly, dimer of alpha and beta chains. A typical microtubule is a hollow water-filled tube with an outer diameter of 25 nm and an inner diameter of 15 nM. Alpha-beta heterodimers associate head-to-tail to form protofilaments running lengthwise along the microtubule wall with the beta-tubulin subunit facing the microtubule plus end conferring a structural polarity. Microtubules usually have 13 protofilaments but different protofilament numbers can be found in some organisms and specialized cells. Mg(2+) serves as cofactor.

The protein resides in the cytoplasm. Its subcellular location is the cytoskeleton. In terms of biological role, tubulin is the major constituent of microtubules, a cylinder consisting of laterally associated linear protofilaments composed of alpha- and beta-tubulin heterodimers. Microtubules grow by the addition of GTP-tubulin dimers to the microtubule end, where a stabilizing cap forms. Below the cap, tubulin dimers are in GDP-bound state, owing to GTPase activity of alpha-tubulin. The chain is Tubulin beta-1 chain (TUBB1) from Cyanophora paradoxa.